The primary structure comprises 81 residues: Putative snRNP Sm-like protein (81 aa).

Residues 13–81 enclose the Sm domain; it reads RPLDALGNSL…RGDNIVYISP (69 aa).

Belongs to the snRNP Sm proteins family.

In Methanothermobacter thermautotrophicus (strain ATCC 29096 / DSM 1053 / JCM 10044 / NBRC 100330 / Delta H) (Methanobacterium thermoautotrophicum), this protein is Putative snRNP Sm-like protein.